The chain runs to 238 residues: Small ribosomal subunit protein uS2 (238 aa).

The protein belongs to the universal ribosomal protein uS2 family.

The sequence is that of Small ribosomal subunit protein uS2 from Haemophilus ducreyi (strain 35000HP / ATCC 700724).